We begin with the raw amino-acid sequence, 568 residues long: MDSSTSLLPPLGSIILACEGLTSLVPLILSVMVCLIATVTISPTLLAYFNDPFELRAYPGPFLARFTSAWISWIISQNRWSETVDLMHRQHGPIVRLSPDHVSVASPAAFAAVYGHSSGALKAPFYNAFANFKIRSIFNTRDRAEHSRKRRVEAHMFSPRSIRALEDTARVHFQVLVRQWDALCAPTGKTVRGSAEGTLGTISWKVHGDRVWFDCMPWFNFWSFDTISDLAFGRPFGMLEAAKGSAHVSKSNTKSVQAVSQDTSHSNEAQSELLEIPAMEVLSELLDFTVALAYLPAWVQPVFGRLPMFRDGYDAAPKLANLSLTAVANRVASQTDRADMLSELLRGRDEEGKPYGLEELSTEAELLIIAGGDTTANTSCATAYYIARDLQIQAKLQAELDVALDGVESDVAPYDAVKDLPYLDAVINEGLRLHSTIGAGLPRVVPSGGMTVLGQHLKEGTVVSSPIYTLHRNEAVWGKNAYEFYPERWLEASADAKKEMMQSFAPFSVGPRACLGRSLALQQLHILLATIFHRYSLVLENNAPAQLPLRDGFARKPMKCIVGVQRRK.

The helical transmembrane segment at 21-41 threads the bilayer; the sequence is LTSLVPLILSVMVCLIATVTI. 2 N-linked (GlcNAc...) asparagine glycosylation sites follow: Asn-321 and Asn-377. Cys-514 contributes to the heme binding site.

This sequence belongs to the cytochrome P450 family. Heme serves as cofactor.

It localises to the membrane. It participates in secondary metabolite biosynthesis. In terms of biological role, cytochrome P450 monooxygenase that is able to use 3,5-dimethoxy-trans-stilbene and 3,5,4'-trimethoxy-trans-stilbene as substrates for oxidation. The protein is Cytochrome P450 monooxygenase 41 of Postia placenta (strain ATCC 44394 / Madison 698-R) (Brown rot fungus).